Consider the following 98-residue polypeptide: Small ribosomal subunit protein uS19 (98 aa).

Residues Thr77–Lys98 are disordered.

The protein belongs to the universal ribosomal protein uS19 family.

Functionally, protein S19 forms a complex with S13 that binds strongly to the 16S ribosomal RNA. The protein is Small ribosomal subunit protein uS19 of Chlorobium phaeobacteroides (strain DSM 266 / SMG 266 / 2430).